The following is a 632-amino-acid chain: Dihydrolipoyllysine-residue acetyltransferase component of pyruvate dehydrogenase complex, mitochondrial (632 aa).

The N-terminal 77 residues, 1–77, are a transit peptide targeting the mitochondrion; that stretch reads MWRVCARRVQ…LLGSPSRRSY (77 aa). 2 consecutive Lipoyl-binding domains span residues 82–158 and 208–284; these read HQKV…CITV and HMQI…CIIV. The residue at position 91 (S91) is a Phosphoserine. 2 positions are modified to N6-lipoyllysine: K123 and K249. The Peripheral subunit-binding (PSBD) domain occupies 342-379; that stretch reads FVSPLAKKLAAEKGIDLTQVKGTGPEGRIIKKDIDSFV. R446 contributes to the CoA binding site. K451 carries the N6-acetyllysine modification. At K458 the chain carries N6-succinyllysine. Residue S460 coordinates CoA. An N6-succinyllysine modification is found at K532. CoA is bound by residues S551, N552, and G576. Active-site residues include H605 and D609.

It belongs to the 2-oxoacid dehydrogenase family. As to quaternary structure, part of the pyruvate dehydrogenase complex (PDHc) that is a multi-enzyme complex composed of multiple copies of three enzymes, pyruvate dehydrogenase (subunits PDH1A and PDHB, E1 component), dihydrolipoamide acetyltransferase (DLAT, E2 component), and dihydrolipoamide dehydrogenase (DLD, E3 component) to which is added an additional protein the E3-binding protein (PDHX, E3BP). In terms of structural architecture, the E2 and E3BP components assemble into a 60meric central core with icosahedral symmetry. The central core is decorated with E1 and E3 proteins. Currently, two alternative models for the E2:E3BP stoichiometry are considered as being either 48:12 (E2(48)-E3BP(12)) or 40:20 (E2(40)-E3BP(20)). Interacts with PDK2 and PDK3. Interacts with SIRT4. Interacts with PDHB. The cofactor is (R)-lipoate. In terms of processing, delipoylated at Lys-123 and Lys-249 by SIRT4, delipoylation decreases the PHD complex activity. In terms of tissue distribution, expressed in flagella of epididymal sperm.

The protein resides in the mitochondrion matrix. The enzyme catalyses N(6)-[(R)-dihydrolipoyl]-L-lysyl-[protein] + acetyl-CoA = N(6)-[(R)-S(8)-acetyldihydrolipoyl]-L-lysyl-[protein] + CoA. In terms of biological role, as part of the pyruvate dehydrogenase complex, catalyzes the transfers of an acetyl group to a lipoic acid moiety. The pyruvate dehydrogenase complex, catalyzes the overall conversion of pyruvate to acetyl-CoA and CO(2), and thereby links cytoplasmic glycolysis and the mitochondrial tricarboxylic acid (TCA) cycle. The sequence is that of Dihydrolipoyllysine-residue acetyltransferase component of pyruvate dehydrogenase complex, mitochondrial from Rattus norvegicus (Rat).